The following is a 169-amino-acid chain: Peptide methionine sulfoxide reductase MsrA (169 aa).

The active site involves C10.

The protein belongs to the MsrA Met sulfoxide reductase family.

The catalysed reaction is L-methionyl-[protein] + [thioredoxin]-disulfide + H2O = L-methionyl-(S)-S-oxide-[protein] + [thioredoxin]-dithiol. It catalyses the reaction [thioredoxin]-disulfide + L-methionine + H2O = L-methionine (S)-S-oxide + [thioredoxin]-dithiol. Has an important function as a repair enzyme for proteins that have been inactivated by oxidation. Catalyzes the reversible oxidation-reduction of methionine sulfoxide in proteins to methionine. The chain is Peptide methionine sulfoxide reductase MsrA from Streptococcus pyogenes serotype M3 (strain ATCC BAA-595 / MGAS315).